A 560-amino-acid chain; its full sequence is MGSSGDVNWKLADHPKLPKGKTIGLIVLDGWGESDPDQYNCIHKAPTPAMDSLKDGKPDTWRLIKAHGTAVGLPSEDDMGNSEVGHNALGAGRIYAQGAKLVDLALASGKIYEDEGFKYISQSFEKGTVHLIGLLSDGGVHSRLDQVQLLLKGFAERGAKRIRVHILTDGRDVLDGSSVGFVETLEADLAALRAKGVDAQVASGGGRMYVTMDRYENDWSVVKRGWDAQVLGEAPHKFKSALEAVKTLRAEPGANDQYLPSFVIVDDNGKAVGPIVDGDAVVTFNFRADRMVMHAKALEYKDFDKFDRVRVPDIRYAGMLQYDGELKLPSRYLVSPPLIDRTSGEYLAHNGVRTFACSETVKFGHVTFFWNGNRSGYFNEKLEEYVEIPSDSGISFNVQPKMKALEIAEKARDAILSGKFDQVRVNLPNGDMVGHTGDIEATVVACEAADRAVRTILDAIEQVGGIYVVTADHGNAEDMVKRDKSGKPALDKEGNLQILTSHTLKPVPIAIGGPGLSAGVRFRQDIETPGLANVAATVMNLHGFVAPSDYETSLIEVVEK.

Gly2 is subject to N-acetylglycine. Mn(2+)-binding residues include Asp29 and Ser82. The active-site Phosphoserine intermediate is the Ser82. Substrate contacts are provided by residues His141, 171 to 172 (RD), Arg207, Arg214, 287 to 290 (RADR), and Lys362. Residues Asp431, His435, Asp472, His473, and His502 each contribute to the Mn(2+) site.

The protein belongs to the BPG-independent phosphoglycerate mutase family. Monomer. Requires Mn(2+) as cofactor.

It localises to the cytoplasm. It carries out the reaction (2R)-2-phosphoglycerate = (2R)-3-phosphoglycerate. It functions in the pathway carbohydrate degradation; glycolysis; pyruvate from D-glyceraldehyde 3-phosphate: step 3/5. Catalyzes the interconversion of 2-phosphoglycerate (2-PGA) and 3-phosphoglycerate (3-PGA). Required for guard cell function (e.g. blue light-, abscisic acid- (ABA), and low CO(2)-regulated stomatal movements) and fertility (e.g. pollen grains production). The sequence is that of Probable 2,3-bisphosphoglycerate-independent phosphoglycerate mutase 2 (PGM2) from Arabidopsis thaliana (Mouse-ear cress).